The chain runs to 151 residues: Ribosomal RNA large subunit methyltransferase H (151 aa).

S-adenosyl-L-methionine is bound by residues L73, G100, and 119–124; that span reads LSKMTM.

Belongs to the RNA methyltransferase RlmH family. As to quaternary structure, homodimer.

It is found in the cytoplasm. It carries out the reaction pseudouridine(1915) in 23S rRNA + S-adenosyl-L-methionine = N(3)-methylpseudouridine(1915) in 23S rRNA + S-adenosyl-L-homocysteine + H(+). Specifically methylates the pseudouridine at position 1915 (m3Psi1915) in 23S rRNA. This chain is Ribosomal RNA large subunit methyltransferase H, found in Campylobacter concisus (strain 13826).